Consider the following 403-residue polypeptide: SH3 and cysteine-rich domain-containing protein (403 aa).

The interval 1–43 is disordered; it reads MIPPSGAREDGVDGLPKETASAEQPPSPASTGSQESKLQKLKR. The segment covering 21–36 has biased composition (polar residues); it reads SAEQPPSPASTGSQES. The Phorbol-ester/DAG-type zinc finger occupies 108 to 160; it reads AHAFQEHIFKKPTFCDVCNHMIVGTNAKHGLRCKACKMSIHHKCMDGLAPQRC. The disordered stretch occupies residues 212–253; the sequence is QRTKKSSSGSGSDSPHRTSTSDLVEVPEEADGPGDGYDLRKR. 2 consecutive SH3 domains span residues 286–345 and 348–403; these read LQMN…RVHQ and KIFR…LENI.

As to quaternary structure, interacts (via SH3 domains) with CACNA1S. Interacts with CACNA1H. Interacts with CACNA1C.

It is found in the cytoplasm. It localises to the cytosol. The protein resides in the cell membrane. The protein localises to the sarcolemma. Functionally, promotes expression of the ion channel CACNA1H at the cell membrane, and thereby contributes to the regulation of channel activity. Plays a minor and redundant role in promoting the expression of calcium channel CACNA1S at the cell membrane, and thereby contributes to increased channel activity. Slows down the inactivation rate of the calcium channel CACNA1C. The chain is SH3 and cysteine-rich domain-containing protein (STAC) from Bos taurus (Bovine).